The sequence spans 458 residues: ATP synthase subunit beta (458 aa).

147–154 serves as a coordination point for ATP; the sequence is GGAGVGKT.

The protein belongs to the ATPase alpha/beta chains family. As to quaternary structure, F-type ATPases have 2 components, CF(1) - the catalytic core - and CF(0) - the membrane proton channel. CF(1) has five subunits: alpha(3), beta(3), gamma(1), delta(1), epsilon(1). CF(0) has three main subunits: a(1), b(2) and c(9-12). The alpha and beta chains form an alternating ring which encloses part of the gamma chain. CF(1) is attached to CF(0) by a central stalk formed by the gamma and epsilon chains, while a peripheral stalk is formed by the delta and b chains.

Its subcellular location is the cell inner membrane. It carries out the reaction ATP + H2O + 4 H(+)(in) = ADP + phosphate + 5 H(+)(out). Produces ATP from ADP in the presence of a proton gradient across the membrane. The catalytic sites are hosted primarily by the beta subunits. The sequence is that of ATP synthase subunit beta from Chromohalobacter salexigens (strain ATCC BAA-138 / DSM 3043 / CIP 106854 / NCIMB 13768 / 1H11).